The sequence spans 295 residues: MEHQLLCCEVETIRRAYPDANLLNDRVLRAMLKAEETCAPSVSYFKCVQKEVLPSMRKIVATWMLEVCEEQKCEEEVFPLAMNYLDRFLSLEPVKKSRLQLLGATCMFVASKMKETIPLTAEKLCIYTDNSIRPEELLQMELLLVNKLKWNLAALTPHDFIEHFLSKMPEAEENKQIIRKHAQTFVALCATDVKFISNPPSMVAAGSVVAAVQGLNLRSPNSFLSYYRLTRFLSRVIKCDPDCLRACQEQIEALLESSLRQAQQNMDPKAAEEEEEEEEEVDLACTPTDVRDVDI.

The Cyclin N-terminal domain occupies 28-152 (LRAMLKAEET…LLVNKLKWNL (125 aa)). The segment at 262–295 (AQQNMDPKAAEEEEEEEEEVDLACTPTDVRDVDI) is disordered. Residue lysine 269 forms a Glycyl lysine isopeptide (Lys-Gly) (interchain with G-Cter in ubiquitin) linkage. A compositionally biased stretch (acidic residues) spans 272-282 (EEEEEEEEEVD). Phosphothreonine is present on threonine 286.

It belongs to the cyclin family. Cyclin D subfamily. Interacts with either CDK4 or CDK6 protein kinase to form a serine/threonine kinase holoenzyme complex. The cyclin subunit imparts substrate specificity to the complex. Component of the ternary complex CCND1/CDK4/CDKN1B required for nuclear translocation and modulation of CDK4-mediated kinase activity. Interacts directly with CDKN1B. Can form similar complexes with either CDKN1A or CDKN2A. Interacts with UHRF2; the interaction ubiquitinates CCND1 and appears to occur independently of phosphorylation. Interacts with USP2. Interacts (via cyclin N-terminal domain) with INSM1 (via N-terminal region); the interaction competes with the binding of CCND1 to CDK4 during cell cycle progression and inhibits CDK4 activity. Interacts with CDK4; the interaction is prevented with the binding of CCND1 to INSM1 during cell cycle progression. Post-translationally, phosphorylation at Thr-286 by MAP kinases is required for ubiquitination and degradation by the DCX(AMBRA1) complex. It also plays an essential role for recognition by the FBXO31 component of SCF (SKP1-cullin-F-box) protein ligase complex following DNA damage. Ubiquitinated at Lys-269 by the DCX(AMBRA1) complex during the transition from G1 to S cell phase, leading to its degradation: ubiquitination is dependent on Thr-286 phosphorylation. The DCX(AMBRA1) complex represents the major regulator of CCND1 stability during the G1/S transition. Also ubiquitinated by the SCF(FBXO4) and Cul7-RING(FBXW8) ubiquitin-protein ligase complexes. Following DNA damage it is ubiquitinated by the SCF(FBXO31) protein ligase complex. SCF(FBXO31) ubiquitination is dependent on Thr-286 phosphorylation. Ubiquitinated also by UHRF2 apparently in a phosphorylation-independent manner. Ubiquitination leads to its degradation and G1 arrest. Deubiquitinated by USP2; leading to its stabilization.

It localises to the nucleus. The protein resides in the cytoplasm. Its subcellular location is the nucleus membrane. Its function is as follows. Regulatory component of the cyclin D1-CDK4 (DC) complex that phosphorylates and inhibits members of the retinoblastoma (RB) protein family including RB1 and regulates the cell-cycle during G(1)/S transition. Phosphorylation of RB1 allows dissociation of the transcription factor E2F from the RB/E2F complex and the subsequent transcription of E2F target genes which are responsible for the progression through the G(1) phase. Hypophosphorylates RB1 in early G(1) phase. Cyclin D-CDK4 complexes are major integrators of various mitogenenic and antimitogenic signals. Also a substrate for SMAD3, phosphorylating SMAD3 in a cell-cycle-dependent manner and repressing its transcriptional activity. Component of the ternary complex, cyclin D1/CDK4/CDKN1B, required for nuclear translocation and activity of the cyclin D-CDK4 complex. Exhibits transcriptional corepressor activity with INSM1 on the NEUROD1 and INS promoters in a cell cycle-independent manner. The polypeptide is G1/S-specific cyclin-D1 (CCND1) (Pongo abelii (Sumatran orangutan)).